A 456-amino-acid chain; its full sequence is uncharacterized protein (456 aa).

Basic and acidic residues-rich tracts occupy residues 181–210 (DQRK…DKKV) and 217–231 (KEIE…ENEE). The disordered stretch occupies residues 181–231 (DQRKESIVNDERKKNPEFREKPDKNEDKKVKPPPSLKEIENKGIDHEENEE). A coiled-coil region spans residues 216–248 (LKEIENKGIDHEENEEDKKRELMFKLQLLQKQY). The chain crosses the membrane as a helical span at residues 347-365 (LALAILFNAVWFIAAKMIM). Polar residues predominate over residues 383-407 (NKSGTTPNSVSPRTWGNSKSPQSEF). The segment at 383–456 (NKSGTTPNSV…MREQGIETLK (74 aa)) is disordered. Positions 441–456 (DESRREMREQGIETLK) are enriched in basic and acidic residues.

This sequence belongs to the IIV-6 067R family.

It is found in the membrane. This is an uncharacterized protein from Invertebrate iridescent virus 6 (IIV-6).